The chain runs to 636 residues: Protein meg-1 (636 aa).

Composition is skewed to polar residues over residues 1–13, 38–54, and 292–355; these read MDNR…NGNF, SSGN…NQQQ, and LSMN…QYNH. 4 disordered regions span residues 1 to 54, 289 to 367, 484 to 504, and 521 to 542; these read MDNR…NQQQ, LFNL…APHL, SDVA…SMYI, and LDSS…KTPS. A Phosphoserine; by mbk-2 modification is found at Ser-574. The tract at residues 591-636 is disordered; it reads MSQSFLHQQDDEAPDCTKNVHSESDLKQAEPQESDKQSDKELPSNE. The segment covering 608–636 has biased composition (basic and acidic residues); the sequence is KNVHSESDLKQAEPQESDKQSDKELPSNE.

In terms of assembly, interacts with pptr-1, pptr-2 and pgl-1. In terms of processing, phosphorylated by mbk-2, which promotes the disassembly of zygotic P granules in the anterior cytoplasm of pre-gastrulation embryos. Dephosphorylated by a phosphatase complex containing the PP2A regulatory subunit pptr-1, which promotes the assembly and accumulation of zygotic P granules in the posterior cytoplasm of pre-gastrulation embryos. Not expressed in the adult germline or in any somatic tissues.

It localises to the cytoplasmic granule. In terms of biological role, p granule component, which acts redundantly with P granule component meg-2 to promote P granule segregation during embryogenesis, and germ cell proliferation and differentiation in larval stages. In its phosphorylated form, and together with meg-2, promotes the disassembly of zygotic P granules in the anterior cytoplasm of pre-gastrulation embryos. In its dephosphorylated form, and together with meg-2, promotes the assembly and accumulation of zygotic P granules in the posterior cytoplasm of pre-gastrulation embryos. May function with the nanos family members nos-2 and nos-3 to promote germ cell proliferation during larval development. Required for fertility. This is Protein meg-1 from Caenorhabditis elegans.